We begin with the raw amino-acid sequence, 777 residues long: Homoaconitase, mitochondrial (777 aa).

A mitochondrion-targeting transit peptide spans 1–35 (MFKRTGSLLLRCRASRVPVIGRPLISLSTSSTSLS). The tract at residues 47–74 (LRRYTEASSSTTQTSPSSSSWPAPDAAP) is disordered. A compositionally biased stretch (low complexity) spans 52–74 (EASSSTTQTSPSSSSWPAPDAAP). Residues C398, C466, and C469 each coordinate [4Fe-4S] cluster.

This sequence belongs to the aconitase/IPM isomerase family. The cofactor is [4Fe-4S] cluster.

It is found in the mitochondrion. The enzyme catalyses (2R,3S)-homoisocitrate = cis-homoaconitate + H2O. It functions in the pathway amino-acid biosynthesis; L-lysine biosynthesis via AAA pathway; L-alpha-aminoadipate from 2-oxoglutarate: step 3/5. Functionally, catalyzes the reversible hydration of cis-homoaconitate to (2R,3S)-homoisocitrate, a step in the alpha-aminoadipate pathway for lysine biosynthesis. The polypeptide is Homoaconitase, mitochondrial (lys4) (Aspergillus fumigatus (strain ATCC MYA-4609 / CBS 101355 / FGSC A1100 / Af293) (Neosartorya fumigata)).